Consider the following 160-residue polypeptide: Glutathione peroxidase homolog BsaA (160 aa).

Residue Cys35 is part of the active site.

The protein belongs to the glutathione peroxidase family.

The chain is Glutathione peroxidase homolog BsaA (bsaA) from Bacillus subtilis (strain 168).